Reading from the N-terminus, the 374-residue chain is Probable carboxylesterase 4, mitochondrial (374 aa).

A mitochondrion-targeting transit peptide spans 1–52 (MLRRITCSSSLASPSLFLRFFRQLPRSYSSPTTIAVSGRNIRRLSTPTTLRC). An Involved in the stabilization of the negatively charged intermediate by the formation of the oxyanion hole motif is present at residues 135 to 137 (HGG). Residues Ser-219, Asp-317, and His-349 contribute to the active site.

It belongs to the 'GDXG' lipolytic enzyme family. In terms of tissue distribution, expressed in leaves, stems, flowers and siliques.

The protein localises to the mitochondrion. It catalyses the reaction a carboxylic ester + H2O = an alcohol + a carboxylate + H(+). In terms of biological role, carboxylesterase acting on esters with varying acyl chain length. The protein is Probable carboxylesterase 4, mitochondrial (CXE4) of Arabidopsis thaliana (Mouse-ear cress).